A 184-amino-acid chain; its full sequence is Protein N-terminal glutamine amidohydrolase (184 aa).

Active-site residues include Cys-14, His-63, and Asp-78.

It belongs to the NTAQ1 family. Monomer.

It catalyses the reaction N-terminal L-glutaminyl-[protein] + H2O = N-terminal L-glutamyl-[protein] + NH4(+). In terms of biological role, mediates the side-chain deamidation of N-terminal glutamine residues to glutamate, an important step in N-end rule pathway of protein degradation. Conversion of the resulting N-terminal glutamine to glutamate renders the protein susceptible to arginylation, polyubiquitination and degradation as specified by the N-end rule. Does not act on substrates with internal or C-terminal glutamine and does not act on non-glutamine residues in any position. The chain is Protein N-terminal glutamine amidohydrolase from Caenorhabditis elegans.